Here is a 111-residue protein sequence, read N- to C-terminus: Ciprofloxacin tolerance protein (111 aa).

Residues 1–5 (MVTAN) lie on the Periplasmic side of the membrane. The helical transmembrane segment at 6–26 (FAAIAGLSLIAVALVAVFFSP) threads the bilayer. Residues 27 to 30 (YRRW) lie on the Cytoplasmic side of the membrane. A helical membrane pass occupies residues 31 to 51 (LGFMLAGMFFWGLLEVVRFGV). Residues 52-58 (QVTFEMP) are Periplasmic-facing. The helical transmembrane segment at 59-79 (VTYSYLTALSLAMVMVTFVLL) threads the bilayer. Over 80-111 (REDKQAQKALANRQYIEHTPVYEDDQQQCSSR) the chain is Cytoplasmic.

It localises to the cell inner membrane. Its function is as follows. May play a role in cellular filamentation, especially in response to ciprofloxacin. Increased expression confers tolerance to the antibiotic ciprofloxacin. The sequence is that of Ciprofloxacin tolerance protein from Acinetobacter baumannii.